Here is a 163-residue protein sequence, read N- to C-terminus: Disulfide bond formation protein B (163 aa).

Residues 1–9 (MRLASPRSL) are Cytoplasmic-facing. A helical transmembrane segment spans residues 10–26 (FVIAFLGSALLIAIALY). The Periplasmic segment spans residues 27-44 (MEHVMGLAPCPLCIVQRI). An intrachain disulfide couples Cys-36 to Cys-39. Residues 45 to 61 (CVIGFGLVCLVAAIHGP) form a helical membrane-spanning segment. Over 62 to 67 (AKVGRR) the chain is Cytoplasmic. A helical membrane pass occupies residues 68–85 (VYAAIAALFVAAGAATAI). Over 86–142 (RQIWLQSVPADQLPSCLPSLEYMMEALPFQEIARLVLHGTAECAEVSWTMLGMSIPE) the chain is Periplasmic. Cys-101 and Cys-128 are oxidised to a cystine. The chain crosses the membrane as a helical span at residues 143–161 (WSLLGFIGMAIVCLWQLLR). Residues 162–163 (RD) are Cytoplasmic-facing.

This sequence belongs to the DsbB family.

The protein resides in the cell inner membrane. Its function is as follows. Required for disulfide bond formation in some periplasmic proteins. Acts by oxidizing the DsbA protein. The polypeptide is Disulfide bond formation protein B (Stutzerimonas stutzeri (strain A1501) (Pseudomonas stutzeri)).